We begin with the raw amino-acid sequence, 1268 residues long: SR-related and CTD-associated factor 8 (1268 aa).

In terms of domain architecture, CID spans 1 to 139 (MEAVKTFNSE…PLLDMAAGIP (139 aa)). At Thr6 the chain carries Phosphothreonine. A Glycyl lysine isopeptide (Lys-Gly) (interchain with G-Cter in SUMO1) cross-link involves residue Lys18. Phosphoserine is present on Ser273. 2 disordered regions span residues 322 to 355 (QQQP…QQHF) and 385 to 469 (EIFE…PVRS). The segment covering 342–354 (HSASPSQGSSQQH) has biased composition (polar residues). The span at 394 to 443 (VAVRSRSRTHSRSRSRSPRKRRSRSRSGSRKRKHRKRSRSRSRERKRKSS) shows a compositional bias: basic residues. Residues 447–461 (SSERRAREREKERQK) are compositionally biased toward basic and acidic residues. The region spanning 477-551 (TTLWVGQVDK…KVIKIAWALN (75 aa)) is the RRM domain. Thr615 bears the Phosphothreonine mark. Ser617 is modified (phosphoserine). Residues 753 to 808 (AGNVFNPPSKAEPEEKVPHLTEHQIPSGENTRPVIPSDIPSSAPMLAQPPGASNTS) are disordered. Residues 763 to 774 (AEPEEKVPHLTE) show a composition bias toward basic and acidic residues. Residues Arg915, Arg925, and Arg936 each carry the asymmetric dimethylarginine modification. The segment at 947 to 1063 (QRGIPPPSVL…GRDHFGRPPV (117 aa)) is disordered. Positions 961 to 970 (HPPPRGPFPP) are enriched in pro residues. 2 stretches are compositionally biased toward basic and acidic residues: residues 1009–1025 (EGDR…REGI) and 1032–1063 (DVRD…RPPV). Arg1071 is modified (asymmetric dimethylarginine). The interval 1199-1268 (ATSQRKGENV…VVESTETEGT (70 aa)) is disordered. Positions 1249–1262 (GTAAGVESEAVVES) are enriched in low complexity.

In terms of assembly, interacts with POLR2A; via C-terminal heptapeptide repeat domain (CTD) phosphorylated at 'Ser-2' and 'Ser-5'. Identified in a complex with CDC5L and other spliceosomal proteins.

The protein localises to the nucleus. Its subcellular location is the nucleus matrix. In terms of biological role, anti-terminator protein required to prevent early mRNA termination during transcription. Together with SCAF4, acts by suppressing the use of early, alternative poly(A) sites, thereby preventing the accumulation of non-functional truncated proteins. Mechanistically, associates with the phosphorylated C-terminal heptapeptide repeat domain (CTD) of the largest RNA polymerase II subunit (POLR2A), and subsequently binds nascent RNA upstream of early polyadenylation sites to prevent premature mRNA transcript cleavage and polyadenylation. Independently of SCAF4, also acts as a positive regulator of transcript elongation. This chain is SR-related and CTD-associated factor 8, found in Rattus norvegicus (Rat).